A 310-amino-acid polypeptide reads, in one-letter code: Methionyl-tRNA formyltransferase (310 aa).

111–114 (SLLP) contacts (6S)-5,6,7,8-tetrahydrofolate.

It belongs to the Fmt family.

It carries out the reaction L-methionyl-tRNA(fMet) + (6R)-10-formyltetrahydrofolate = N-formyl-L-methionyl-tRNA(fMet) + (6S)-5,6,7,8-tetrahydrofolate + H(+). In terms of biological role, attaches a formyl group to the free amino group of methionyl-tRNA(fMet). The formyl group appears to play a dual role in the initiator identity of N-formylmethionyl-tRNA by promoting its recognition by IF2 and preventing the misappropriation of this tRNA by the elongation apparatus. This chain is Methionyl-tRNA formyltransferase, found in Rhodopseudomonas palustris (strain BisB5).